Reading from the N-terminus, the 64-residue chain is p7b (64 aa).

The Cytoplasmic portion of the chain corresponds to 1–12 (MECVCVDSSWPQ). The helical; Signal-anchor for type II membrane protein transmembrane segment at 13–30 (WLRNLILGILISSILFIL) threads the bilayer. Over 31-64 (TKTQDTVAVYHEPSVYSIDQTQKFQKIDIHNGGK) the chain is Lumenal.

This sequence belongs to the gammacarmovirus double gene block protein 2 family.

It is found in the host endoplasmic reticulum membrane. Functionally, required for cell-to-cell movement of virions in the host plant together with p7a. This chain is p7b, found in Maize chlorotic mottle virus (isolate United States/Kansas/1987) (MCMV).